The sequence spans 90 residues: High mobility group nucleosome-binding domain-containing protein 4 (90 aa).

The segment at 1 to 90 is disordered; the sequence is MPKRKAKGDA…QKAEGTGDAK (90 aa). Positions 7–23 are enriched in basic and acidic residues; it reads KGDAKGDKGKVKDEPQR. At serine 29 the chain carries ADP-ribosylserine. Positions 37–64 are enriched in basic and acidic residues; the sequence is PEPRPKKAPAKKGEKLAKGRKGKAEVSK. Residues 65–83 are compositionally biased toward polar residues; the sequence is DGNNPAKNRDASTVQSQKA. Serine 80 is subject to Phosphoserine. Residue lysine 82 is modified to N6-acetyllysine.

Belongs to the HMGN family.

It is found in the nucleus. The protein is High mobility group nucleosome-binding domain-containing protein 4 (HMGN4) of Bos taurus (Bovine).